Here is a 484-residue protein sequence, read N- to C-terminus: Bifunctional protein GlmU (484 aa).

The tract at residues 1–240 (MSASRPAAVM…RTEVEGVNDR (240 aa)) is pyrophosphorylase. UDP-N-acetyl-alpha-D-glucosamine contacts are provided by residues 12 to 15 (LAAG), K26, Q79, and 84 to 85 (GT). A Mg(2+)-binding site is contributed by D113. Positions 150, 165, 180, and 238 each coordinate UDP-N-acetyl-alpha-D-glucosamine. N238 provides a ligand contact to Mg(2+). The linker stretch occupies residues 241-261 (VQLAEARRLLNARLLEQLMRD). The tract at residues 262–484 (GVTVVDPAST…RARARSEEDR (223 aa)) is N-acetyltransferase. R343 and K361 together coordinate UDP-N-acetyl-alpha-D-glucosamine. The active-site Proton acceptor is the H373. Residues Y376 and N387 each coordinate UDP-N-acetyl-alpha-D-glucosamine. Residues A390, 396–397 (NY), S415, and A433 each bind acetyl-CoA. Residues 457–484 (EGWVERKRPGTPAAQAAERARARSEEDR) are disordered. Residues 474–484 (ERARARSEEDR) show a composition bias toward basic and acidic residues.

In the N-terminal section; belongs to the N-acetylglucosamine-1-phosphate uridyltransferase family. This sequence in the C-terminal section; belongs to the transferase hexapeptide repeat family. Homotrimer. Requires Mg(2+) as cofactor.

It is found in the cytoplasm. It carries out the reaction alpha-D-glucosamine 1-phosphate + acetyl-CoA = N-acetyl-alpha-D-glucosamine 1-phosphate + CoA + H(+). It catalyses the reaction N-acetyl-alpha-D-glucosamine 1-phosphate + UTP + H(+) = UDP-N-acetyl-alpha-D-glucosamine + diphosphate. The protein operates within nucleotide-sugar biosynthesis; UDP-N-acetyl-alpha-D-glucosamine biosynthesis; N-acetyl-alpha-D-glucosamine 1-phosphate from alpha-D-glucosamine 6-phosphate (route II): step 2/2. Its pathway is nucleotide-sugar biosynthesis; UDP-N-acetyl-alpha-D-glucosamine biosynthesis; UDP-N-acetyl-alpha-D-glucosamine from N-acetyl-alpha-D-glucosamine 1-phosphate: step 1/1. It participates in bacterial outer membrane biogenesis; LPS lipid A biosynthesis. Catalyzes the last two sequential reactions in the de novo biosynthetic pathway for UDP-N-acetylglucosamine (UDP-GlcNAc). The C-terminal domain catalyzes the transfer of acetyl group from acetyl coenzyme A to glucosamine-1-phosphate (GlcN-1-P) to produce N-acetylglucosamine-1-phosphate (GlcNAc-1-P), which is converted into UDP-GlcNAc by the transfer of uridine 5-monophosphate (from uridine 5-triphosphate), a reaction catalyzed by the N-terminal domain. This is Bifunctional protein GlmU from Thermobifida fusca (strain YX).